Reading from the N-terminus, the 446-residue chain is N-succinylarginine dihydrolase (446 aa).

Substrate-binding positions include 19–28, Asn110, and 137–138; these read AGLSFGNVAS and HR. Glu174 is a catalytic residue. Residue Arg213 participates in substrate binding. His249 is a catalytic residue. Substrate contacts are provided by Asp251 and Asn364. Catalysis depends on Cys370, which acts as the Nucleophile.

It belongs to the succinylarginine dihydrolase family. As to quaternary structure, homodimer.

The enzyme catalyses N(2)-succinyl-L-arginine + 2 H2O + 2 H(+) = N(2)-succinyl-L-ornithine + 2 NH4(+) + CO2. The protein operates within amino-acid degradation; L-arginine degradation via AST pathway; L-glutamate and succinate from L-arginine: step 2/5. Catalyzes the hydrolysis of N(2)-succinylarginine into N(2)-succinylornithine, ammonia and CO(2). The protein is N-succinylarginine dihydrolase of Burkholderia orbicola (strain MC0-3).